The sequence spans 188 residues: Elongation factor P (188 aa).

The protein belongs to the elongation factor P family.

Its subcellular location is the cytoplasm. The protein operates within protein biosynthesis; polypeptide chain elongation. Involved in peptide bond synthesis. Stimulates efficient translation and peptide-bond synthesis on native or reconstituted 70S ribosomes in vitro. Probably functions indirectly by altering the affinity of the ribosome for aminoacyl-tRNA, thus increasing their reactivity as acceptors for peptidyl transferase. In Leptospira biflexa serovar Patoc (strain Patoc 1 / Ames), this protein is Elongation factor P.